Consider the following 193-residue polypeptide: Ribosomal RNA small subunit methyltransferase G (193 aa).

S-adenosyl-L-methionine contacts are provided by residues glycine 61, leucine 66, 112–113 (IE), and arginine 126.

Belongs to the methyltransferase superfamily. RNA methyltransferase RsmG family.

It is found in the cytoplasm. The enzyme catalyses guanosine(527) in 16S rRNA + S-adenosyl-L-methionine = N(7)-methylguanosine(527) in 16S rRNA + S-adenosyl-L-homocysteine. In terms of biological role, specifically methylates the N7 position of guanine in position 527 of 16S rRNA. The protein is Ribosomal RNA small subunit methyltransferase G of Paracoccus denitrificans (strain Pd 1222).